The following is a 282-amino-acid chain: Bifunctional protein FolD (282 aa).

NADP(+) is bound by residues 165 to 167 (GAS) and I231.

Belongs to the tetrahydrofolate dehydrogenase/cyclohydrolase family. In terms of assembly, homodimer.

It carries out the reaction (6R)-5,10-methylene-5,6,7,8-tetrahydrofolate + NADP(+) = (6R)-5,10-methenyltetrahydrofolate + NADPH. It catalyses the reaction (6R)-5,10-methenyltetrahydrofolate + H2O = (6R)-10-formyltetrahydrofolate + H(+). It functions in the pathway one-carbon metabolism; tetrahydrofolate interconversion. Catalyzes the oxidation of 5,10-methylenetetrahydrofolate to 5,10-methenyltetrahydrofolate and then the hydrolysis of 5,10-methenyltetrahydrofolate to 10-formyltetrahydrofolate. In Francisella tularensis subsp. novicida (strain U112), this protein is Bifunctional protein FolD.